A 536-amino-acid polypeptide reads, in one-letter code: uncharacterized protein (536 aa).

The segment at 71–98 (LFVIVKSGCSCPSGRICRHMLAVFLYVY) adopts an SWIM-type zinc-finger fold. Residues 482 to 528 (YKEAARYLKKLRTLYKKAKKQKVWERYIQLLSSHYKRLRALQEELQK) are a coiled coil.

This is an uncharacterized protein from Bacillus subtilis (strain 168).